The sequence spans 104 residues: L-rhamnose mutarotase (104 aa).

Tyr-18 provides a ligand contact to substrate. His-22 (proton donor) is an active-site residue. Substrate is bound by residues Tyr-41 and 76–77; that span reads WW.

Belongs to the rhamnose mutarotase family. As to quaternary structure, homodimer.

The protein resides in the cytoplasm. The catalysed reaction is alpha-L-rhamnose = beta-L-rhamnose. The protein operates within carbohydrate metabolism; L-rhamnose metabolism. Its function is as follows. Involved in the anomeric conversion of L-rhamnose. The protein is L-rhamnose mutarotase of Lachnoclostridium phytofermentans (strain ATCC 700394 / DSM 18823 / ISDg) (Clostridium phytofermentans).